Consider the following 738-residue polypeptide: Phosphoribosylformylglycinamidine synthase subunit PurL (738 aa).

His53 is a catalytic residue. Residues Tyr56 and Lys95 each coordinate ATP. Glu97 serves as a coordination point for Mg(2+). Residues 98–101 (SHNH) and Arg120 contribute to the substrate site. His99 (proton acceptor) is an active-site residue. Asp121 contributes to the Mg(2+) binding site. Gln244 provides a ligand contact to substrate. A Mg(2+)-binding site is contributed by Asp274. 318-320 (ESQ) is a binding site for substrate. Asp499 and Gly536 together coordinate ATP. Residue Asn537 participates in Mg(2+) binding. Substrate is bound at residue Ser539.

The protein belongs to the FGAMS family. As to quaternary structure, monomer. Part of the FGAM synthase complex composed of 1 PurL, 1 PurQ and 2 PurS subunits.

It localises to the cytoplasm. It carries out the reaction N(2)-formyl-N(1)-(5-phospho-beta-D-ribosyl)glycinamide + L-glutamine + ATP + H2O = 2-formamido-N(1)-(5-O-phospho-beta-D-ribosyl)acetamidine + L-glutamate + ADP + phosphate + H(+). The protein operates within purine metabolism; IMP biosynthesis via de novo pathway; 5-amino-1-(5-phospho-D-ribosyl)imidazole from N(2)-formyl-N(1)-(5-phospho-D-ribosyl)glycinamide: step 1/2. Part of the phosphoribosylformylglycinamidine synthase complex involved in the purines biosynthetic pathway. Catalyzes the ATP-dependent conversion of formylglycinamide ribonucleotide (FGAR) and glutamine to yield formylglycinamidine ribonucleotide (FGAM) and glutamate. The FGAM synthase complex is composed of three subunits. PurQ produces an ammonia molecule by converting glutamine to glutamate. PurL transfers the ammonia molecule to FGAR to form FGAM in an ATP-dependent manner. PurS interacts with PurQ and PurL and is thought to assist in the transfer of the ammonia molecule from PurQ to PurL. The protein is Phosphoribosylformylglycinamidine synthase subunit PurL of Leuconostoc mesenteroides subsp. mesenteroides (strain ATCC 8293 / DSM 20343 / BCRC 11652 / CCM 1803 / JCM 6124 / NCDO 523 / NBRC 100496 / NCIMB 8023 / NCTC 12954 / NRRL B-1118 / 37Y).